Reading from the N-terminus, the 539-residue chain is Protein pim1 (539 aa).

A disordered region spans residues 1-53 (MTSNRSTRSSTKREEVSKNGVEKRELDESDVMKNGKKPVKRAKVSSLPKPVRV). Residues 11 to 33 (TKREEVSKNGVEKRELDESDVMK) are compositionally biased toward basic and acidic residues. Over residues 34–43 (NGKKPVKRAK) the composition is skewed to basic residues. RCC1 repeat units follow at residues 70-125 (RLNV…ALSH), 127-191 (GRVY…AITD), 192-243 (NGCC…ALTT), 244-296 (TGKV…AIDN), 298-353 (GRVY…ALLE), 354-417 (DGRV…AVTS), and 419-472 (GKVY…IAGI). Residues 478–539 (EPVANGIKSE…SVLEPSSTTA (62 aa)) are disordered. Residues 486-504 (SEPENEKKLKTEETSKTDD) show a composition bias toward basic and acidic residues. Polar residues predominate over residues 514–525 (VTSNGEPSTATS).

In terms of assembly, oligomer of dis3, pim1 and spi1. Interacts with ned1.

Its subcellular location is the nucleus. Its function is as follows. Promotes the exchange of Ran(spi1)-bound GDP by GTP. Involved in the control of mitosis. Regulates a variety of nuclear events, including mitotic check-point, chromosome decondensation and mRNA processing/transport. This chain is Protein pim1 (pim1), found in Schizosaccharomyces pombe (strain 972 / ATCC 24843) (Fission yeast).